The sequence spans 857 residues: Potassium channel AKT1 (857 aa).

At 1–61 (MRGGALLCGQ…PYDHKYRIWE (61 aa)) the chain is on the cytoplasmic side. A helical membrane pass occupies residues 62–82 (AFLVVLVVYTAWVSPFEFGFL). Topologically, residues 83–90 (RKPRPPLS) are extracellular. The helical transmembrane segment at 91–111 (ITDNIVNAFFAIDIIMTFFVG) threads the bilayer. The Cytoplasmic portion of the chain corresponds to 112–134 (YLDKSTYLIVDDRKQIAFKYLRS). The helical transmembrane segment at 135 to 155 (WFLLDLVSTIPSEAAMRISSQ) threads the bilayer. The Extracellular segment spans residues 156-158 (SYG). Residues 159-179 (LFNMLRLWRLRRVGALFARLE) form a helical; Voltage-sensor membrane-spanning segment. The Cytoplasmic portion of the chain corresponds to 180-193 (KDRNFNYFWVRCAK). A helical membrane pass occupies residues 194 to 214 (LVCVTLFAVHCAACFYYLIAA). The Extracellular portion of the chain corresponds to 215 to 241 (RNSNPAKTWIGANVANFLEESLWMRYV). An intramembrane region (pore-forming) is located at residues 242–261 (TSMYWSITTLTTVGYGDLHP). Over 262 to 265 (VNTK) the chain is Extracellular. The helical transmembrane segment at 266 to 286 (EMIFDIFYMLFNLGLTAYLIG) threads the bilayer. The Cytoplasmic portion of the chain corresponds to 287-857 (NMTNLVVHGT…GDHLIFATDS (571 aa)). 372 to 493 (LFRGVSNDLL…IMNNLLQHLK (122 aa)) is an a nucleoside 3',5'-cyclic phosphate binding site. 6 ANK repeats span residues 515–546 (KMDLPLNLCFAAIREDDLLLHQLLKRGLDPNE), 550–579 (NGRTPLHIAASKGTLNCVLLLLEYHADPNC), 583–612 (EGSVPLWEAMVEGHEKVVKVLLEHGSTIDA), 614–643 (DVGHFACTAAEQGNLKLLKEIVLHGGDVTR), 647–676 (TGTSALHTAVCEENIEMVKYLLEQGADVNK), and 680–709 (HGWTPRDLAEQQGHEDIKALFREKLHERRV). Positions 790-857 (RVTISCAEKD…GDHLIFATDS (68 aa)) constitute a KHA domain.

This sequence belongs to the potassium channel family. Plant (TC 1.A.1.4) subfamily. The potassium channel is probably composed of a homo- or heterotetrameric complex of pore-forming subunits. Possible heteromultimer with AKT2 or KAT3. Part of a K(+)-channel calcium-sensing kinase/phosphatase complex composed by a calcium sensor CBL (CBL1, CBL2, CBL3 or CBL9), a kinase CIPK (CIPK6, CIPK16 or CIPK23), a phosphatase PP2C (AIP1) and a K(+)-channel (AKT1). Interacts directly with AIP1, CBL10, CIPK6, CIPK16 and CIPK23. Post-translationally, phosphorylated by CIPK proteins CIPK6, CIPK16 and CIPK23. The activation by phosphorylation is induced by low K(+) conditions and stimulates K(+) uptake and relocation. Dephosphorylation by AIP1 repressed the transport activity. As to expression, preferentially expressed in the peripheral cell layers of root mature including root cortex and root hairs. Detected also, at a lower level, in the mesophyll of the leaves and at restricted sites corresponding to hydathodes and guard cells.

It is found in the cell membrane. Highly selective inward-rectifying potassium channel that mediate potassium uptake by plant roots in response to low K(+) conditions, by a calcium-, CBL-, and CIPK-dependent pathway. Positively regulated by phosphorylation by CIPK23. Negatively regulated by a kinase-independent regulatory mechanism involving a competing direct binding of CBL10. Involved in the stomatal regulation by monitoring the turgor pressure in guard cells. Assuming opened or closed conformations in response to the voltage difference across the membrane, the channel is activated by hyperpolarization. May interact with the cytoskeleton or with regulatory proteins. Is essential with POT5/HAK5 for high-affinity potassium uptake in roots during seedling establishment and postgermination growth under low potassium conditions. The sequence is that of Potassium channel AKT1 (AKT1) from Arabidopsis thaliana (Mouse-ear cress).